We begin with the raw amino-acid sequence, 975 residues long: Kinesin-like protein KIN-14K (975 aa).

Positions 1-40 (MKNRIKKGSSMIGVYGRSDGSSSIQSSNGSESRESIDDNK) are disordered. The segment covering 17-30 (RSDGSSSIQSSNGS) has biased composition (low complexity). The span at 31–40 (ESRESIDDNK) shows a compositional bias: basic and acidic residues. Positions 40–143 (KQGHQSLVEW…SLKALKASFS (104 aa)) constitute a Calponin-homology (CH) domain. The stretch at 289–345 (KERSNAELSKLKQELEIVKETHEKQFLELKLNAQKAKVELERQVKNSELRVVEAKEL) forms a coiled coil. The Kinesin motor domain maps to 436 to 746 (NIRVYCRIRP…LKFAERVSGV (311 aa)). An ATP-binding site is contributed by 520 to 527 (GQTGSGKT). The stretch at 757-788 (GRDVRQLMEQVSNLKDMIAKKDEELQKFQNIN) forms a coiled coil. 2 disordered regions span residues 801 to 852 (VSPP…GAKD) and 900 to 975 (LFPE…NRKR). Low complexity predominate over residues 944–958 (LSISTTSSKALTSSK).

It belongs to the TRAFAC class myosin-kinesin ATPase superfamily. Kinesin family. KIN-14 subfamily.

In Arabidopsis thaliana (Mouse-ear cress), this protein is Kinesin-like protein KIN-14K.